A 119-amino-acid chain; its full sequence is Holo-[acyl-carrier-protein] synthase (119 aa).

Positions 8 and 59 each coordinate Mg(2+).

It belongs to the P-Pant transferase superfamily. AcpS family. Requires Mg(2+) as cofactor.

It is found in the cytoplasm. It catalyses the reaction apo-[ACP] + CoA = holo-[ACP] + adenosine 3',5'-bisphosphate + H(+). Transfers the 4'-phosphopantetheine moiety from coenzyme A to a Ser of acyl-carrier-protein. This chain is Holo-[acyl-carrier-protein] synthase, found in Staphylococcus aureus (strain USA300).